Here is a 419-residue protein sequence, read N- to C-terminus: Dual specificity mitogen-activated protein kinase kinase 7 (419 aa).

Ala-2 carries the N-acetylalanine modification. Residues 2–30 (AASSLEQKLSRLEAKLKQENREARRRIDL) are a coiled coil. The span at 18–30 (KQENREARRRIDL) shows a compositional bias: basic and acidic residues. The tract at residues 18–76 (KQENREARRRIDLNLDISPQRPRPTLQLPLANDGGSRSPSSESSPQHPTPPARPRHMLG) is disordered. Residues 36 to 63 (PQRPRPTLQLPLANDGGSRSPSSESSPQ) are compositionally biased toward low complexity. The tract at residues 37–57 (QRPRPTLQLPLANDGGSRSPS) is d domain. Residues 120 to 380 (LENLGEMGSG…YNKLLEHSFI (261 aa)) form the Protein kinase domain. ATP contacts are provided by residues 126-134 (MGSGTCGQV) and Lys-149. The active-site Proton acceptor is Asp-243. Ser-271 is subject to Phosphoserine; by MAP3K. A Phosphothreonine; by MAP3K modification is found at Thr-275. The interval 377–400 (HSFIKRYETLEVDVASWFKDVMAK) is DVD domain. Ser-411 bears the Phosphoserine mark.

This sequence belongs to the protein kinase superfamily. STE Ser/Thr protein kinase family. MAP kinase kinase subfamily. As to quaternary structure, interacts with isoform 1 of VRK2. Interacts (via its D domain) with its substrates MAPK8/JNK1, MAPK9/JNK2 and MAPK10/JNK3. Interacts (via its DVD domain) with MAP3Ks activators like MAP3K5/ASK1 and MAP3K1/MEKK1. Interacts with MAPK8IP1/JIP1, MAPK8IP2/JIP2 and MAPK8IP3/JIP3 scaffold proteins. Interacts with RASSF7, the interaction promotes phosphorylation. Found in a complex with SH3RF1, RAC1, MAP3K11/MLK3, MAPK8IP1/JIP1 and MAPK8/JNK1. Found in a complex with SH3RF1, RAC2, MAP3K7/TAK1, MAPK8IP1/JIP1, MAPK8/JNK1 and MAPK9/JNK2. Requires Mg(2+) as cofactor. Activated by phosphorylation on Ser-271 and Thr-275 by MAP kinase kinase kinases (MAP3Ks). Ubiquitous; with highest level of expression in skeletal muscle. Isoform 3 is found at low levels in placenta, fetal liver, and skeletal muscle.

The protein resides in the nucleus. The protein localises to the cytoplasm. The enzyme catalyses L-seryl-[protein] + ATP = O-phospho-L-seryl-[protein] + ADP + H(+). The catalysed reaction is L-threonyl-[protein] + ATP = O-phospho-L-threonyl-[protein] + ADP + H(+). It carries out the reaction L-tyrosyl-[protein] + ATP = O-phospho-L-tyrosyl-[protein] + ADP + H(+). Activated by phosphorylation by specific MAP kinase kinase kinases such as MAP3K1/MEKK1, MAP3K3/MEKK3, MAP3K11/MLK3 and MAP3K12/DLK. Dual specificity protein kinase which acts as an essential component of the MAP kinase signal transduction pathway. Essential component of the stress-activated protein kinase/c-Jun N-terminal kinase (SAP/JNK) signaling pathway. With MAP2K4/MKK4, is the one of the only known kinase to directly activate the stress-activated protein kinase/c-Jun N-terminal kinases MAPK8/JNK1, MAPK9/JNK2 and MAPK10/JNK3. MAP2K4/MKK4 and MAP2K7/MKK7 both activate the JNKs by phosphorylation, but they differ in their preference for the phosphorylation site in the Thr-Pro-Tyr motif. MAP2K4/MKK4 shows preference for phosphorylation of the Tyr residue and MAP2K7/MKK7 for the Thr residue. The monophosphorylation of JNKs on the Thr residue is sufficient to increase JNK activity indicating that MAP2K7/MKK7 is important to trigger JNK activity, while the additional phosphorylation of the Tyr residue by MAP2K4/MKK4 ensures optimal JNK activation. Has a specific role in JNK signal transduction pathway activated by pro-inflammatory cytokines. The MKK/JNK signaling pathway is also involved in mitochondrial death signaling pathway, including the release cytochrome c, leading to apoptosis. Part of a non-canonical MAPK signaling pathway, composed of the upstream MAP3K12 kinase and downstream MAP kinases MAPK1/ERK2 and MAPK3/ERK1, that enhances the AP-1-mediated transcription of APP in response to APOE. This is Dual specificity mitogen-activated protein kinase kinase 7 (MAP2K7) from Homo sapiens (Human).